A 263-amino-acid chain; its full sequence is Endonuclease 8 (263 aa).

Proline 2 (schiff-base intermediate with DNA) is an active-site residue. Glutamate 3 serves as the catalytic Proton donor. Lysine 53 (proton donor; for beta-elimination activity) is an active-site residue. DNA-binding residues include glutamine 70, arginine 125, and asparagine 169. The FPG-type zinc finger occupies 229–263; sequence KVFHRDGEPCERCGGIIEKTTLSSRPFYWCPGCQH. Arginine 253 serves as the catalytic Proton donor; for delta-elimination activity.

Belongs to the FPG family. The cofactor is Zn(2+).

The enzyme catalyses 2'-deoxyribonucleotide-(2'-deoxyribose 5'-phosphate)-2'-deoxyribonucleotide-DNA = a 3'-end 2'-deoxyribonucleotide-(2,3-dehydro-2,3-deoxyribose 5'-phosphate)-DNA + a 5'-end 5'-phospho-2'-deoxyribonucleoside-DNA + H(+). In terms of biological role, involved in base excision repair of DNA damaged by oxidation or by mutagenic agents. Acts as a DNA glycosylase that recognizes and removes damaged bases. Has a preference for oxidized pyrimidines, such as thymine glycol, 5,6-dihydrouracil and 5,6-dihydrothymine. Has AP (apurinic/apyrimidinic) lyase activity and introduces nicks in the DNA strand. Cleaves the DNA backbone by beta-delta elimination to generate a single-strand break at the site of the removed base with both 3'- and 5'-phosphates. This Escherichia coli O127:H6 (strain E2348/69 / EPEC) protein is Endonuclease 8.